Here is a 27-residue protein sequence, read N- to C-terminus: Dermaseptin-S4 (27 aa).

Belongs to the frog skin active peptide (FSAP) family. Dermaseptin subfamily. In terms of assembly, monomer and oligomer. Forms aggregates in aqueous environments. In terms of tissue distribution, expressed by the skin glands.

The protein localises to the secreted. Functionally, potent antimicrobial peptide with activity against bacteria and protozoa. Also has activity against fungi. Also shows activity against enveloped herpes simplex virus type 1. Probably acts by disturbing membrane functions with its amphipathic structure. Binds to healthy erythrocytes (this binding is receptor independent), and has strong hemolytic activity. Does not bind to P.falciparum infected erythrocytes, but accumulates within the parasite. Kills the parasite, and only at high concentrations has a hemolytic activity on the host cell. In vitro, shows high spermicidal activities. This chain is Dermaseptin-S4, found in Phyllomedusa sauvagei (Sauvage's leaf frog).